The primary structure comprises 371 residues: tRNA-specific 2-thiouridylase MnmA (371 aa).

ATP-binding positions include 13 to 20 (GMSGGVDS) and Met39. The segment at 99–101 (NPD) is interaction with target base in tRNA. Cys104 serves as the catalytic Nucleophile. Cys104 and Cys200 are disulfide-bonded. Gly128 provides a ligand contact to ATP. Residues 150 to 152 (KDQ) are interaction with tRNA. Cys200 (cysteine persulfide intermediate) is an active-site residue. Residues 309–310 (RY) are interaction with tRNA.

The protein belongs to the MnmA/TRMU family.

The protein localises to the cytoplasm. The catalysed reaction is S-sulfanyl-L-cysteinyl-[protein] + uridine(34) in tRNA + AH2 + ATP = 2-thiouridine(34) in tRNA + L-cysteinyl-[protein] + A + AMP + diphosphate + H(+). Its function is as follows. Catalyzes the 2-thiolation of uridine at the wobble position (U34) of tRNA, leading to the formation of s(2)U34. This chain is tRNA-specific 2-thiouridylase MnmA, found in Bacillus subtilis (strain 168).